Here is a 54-residue protein sequence, read N- to C-terminus: Ovomucoid (54 aa).

In terms of domain architecture, Kazal-like spans 4 to 54; sequence VDCSDYPKPACLLEYMPLCGSDNKTYDNKCSFCNAVVDSNGTLSLSHFGKC. Intrachain disulfides connect cysteine 6–cysteine 36, cysteine 14–cysteine 33, and cysteine 22–cysteine 54. Asparagine 43 is a glycosylation site (N-linked (GlcNAc...) asparagine).

It localises to the secreted. The sequence is that of Ovomucoid from Opisthocomus hoazin (Hoatzin).